We begin with the raw amino-acid sequence, 489 residues long: Tyrosine-protein phosphatase MSG5 (489 aa).

A compositionally biased stretch (basic and acidic residues) spans 1–18; the sequence is MQFHSDKQHLDSKTDIDF. The disordered stretch occupies residues 1–30; that stretch reads MQFHSDKQHLDSKTDIDFKPNSPRSLQNRN. Phosphoserine occurs at positions 22, 98, and 151. Residue Thr178 is modified to Phosphothreonine. Residues 233–375 form the Tyrosine-protein phosphatase domain; it reads GPLLVLPPNL…LMEWGTMLSK (143 aa). Cys319 serves as the catalytic Phosphocysteine intermediate. 2 disordered regions span residues 375–401 and 419–489; these read KNSP…VSST and LSSS…MFLP. Residues 419-450 are compositionally biased toward low complexity; that stretch reads LSSSPNDSSVNSSEVTPRTPATLTGARTALAT. Basic and acidic residues predominate over residues 451–460; that stretch reads ERGEDDEHCK.

Belongs to the protein-tyrosine phosphatase family. Non-receptor class dual specificity subfamily.

It carries out the reaction O-phospho-L-tyrosyl-[protein] + H2O = L-tyrosyl-[protein] + phosphate. Functionally, dual specificity phosphatase that dephosphorylates MAP kinase FUS3 on both a Tyr and a Ser or Thr. Has a role in adaptation to pheromone. This Saccharomyces cerevisiae (strain ATCC 204508 / S288c) (Baker's yeast) protein is Tyrosine-protein phosphatase MSG5 (MSG5).